Consider the following 186-residue polypeptide: MTSDEILMDAEERMDKAVSVLQNNLSGIRTGRANPGLVDSIKVEVYGSLTPLKQLASIGTPEPQQILIRPYDATTIKDIEKAIVAGDLGLNPQNDGRVIRLNVPPLSGEVRKKMVSRIKELAEEAKVSIRNIRRDANKAAETAEKDKEMTEDDRDKTKDQVQELTKKAETNVNESAKAREAEVMED.

2 stretches are compositionally biased toward basic and acidic residues: residues 134-169 (RDANKAAETAEKDKEMTEDDRDKTKDQVQELTKKAE) and 176-186 (AKAREAEVMED). The tract at residues 134-186 (RDANKAAETAEKDKEMTEDDRDKTKDQVQELTKKAETNVNESAKAREAEVMED) is disordered.

It belongs to the RRF family.

Its subcellular location is the cytoplasm. Responsible for the release of ribosomes from messenger RNA at the termination of protein biosynthesis. May increase the efficiency of translation by recycling ribosomes from one round of translation to another. In Rhodopirellula baltica (strain DSM 10527 / NCIMB 13988 / SH1), this protein is Ribosome-recycling factor.